The primary structure comprises 253 residues: HTH-type transcriptional activator TipA (253 aa).

Positions 1–71 (MSYSVGQVAG…LDEVAALLDD (71 aa)) constitute an HTH merR-type domain. A DNA-binding region (H-T-H motif) is located at residues 5 to 24 (VGQVAGFAGVTVRTLHHYDD).

In terms of assembly, homodimer.

Functionally, transcriptional activator. Is activated when bound to the antibiotic thiostrepton. This chain is HTH-type transcriptional activator TipA (tipA), found in Streptomyces coelicolor (strain ATCC BAA-471 / A3(2) / M145).